The primary structure comprises 488 residues: Aspartyl/glutamyl-tRNA(Asn/Gln) amidotransferase subunit B (488 aa).

It belongs to the GatB/GatE family. GatB subfamily. As to quaternary structure, heterotrimer of A, B and C subunits.

The enzyme catalyses L-glutamyl-tRNA(Gln) + L-glutamine + ATP + H2O = L-glutaminyl-tRNA(Gln) + L-glutamate + ADP + phosphate + H(+). It catalyses the reaction L-aspartyl-tRNA(Asn) + L-glutamine + ATP + H2O = L-asparaginyl-tRNA(Asn) + L-glutamate + ADP + phosphate + 2 H(+). Allows the formation of correctly charged Asn-tRNA(Asn) or Gln-tRNA(Gln) through the transamidation of misacylated Asp-tRNA(Asn) or Glu-tRNA(Gln) in organisms which lack either or both of asparaginyl-tRNA or glutaminyl-tRNA synthetases. The reaction takes place in the presence of glutamine and ATP through an activated phospho-Asp-tRNA(Asn) or phospho-Glu-tRNA(Gln). In Chlamydia trachomatis serovar A (strain ATCC VR-571B / DSM 19440 / HAR-13), this protein is Aspartyl/glutamyl-tRNA(Asn/Gln) amidotransferase subunit B.